A 1177-amino-acid chain; its full sequence is MDNIQTFIKESDDFKSIINGLHEGLKEQLLAGLSGSARSVFTSALANETNKPIFLITHNLYQAQKVTDDLTSLLEDRSVLLYPVNELISSEIAVASPELRAQRLDVINRLTNGEAPIVVAPVAAIRRMLPPVEVWKSSQMLIQVGHDIEPDQLASRLVEVGYERSDMVSAPGEFSIRGGIIDIYPLTSENPVRIELFDTEVDSIRSFNSDDQRSIETLTSINIGPAKELIIRPEEKARAMEKIDSGLAASLKKLKADKQKEILHANISHDKERLSEGQTDQELVKYLSYFYEKPASLLDYTPDNTLLILDEVSRIHEMEEQLQKEEAEFITNLLEEGKILHDIRLSFSFQKIVAEQKRPLLYYSLFLRHVHHTSPQNIVNVSGRQMQSFHGQMNVLAGEMERFKKSNFTVVFLGANKERTQKLSSVLADYDIEAAMTDSKKALVQGQVYIMEGELQSGFELPLMKLAVITEEELFKNRVKKKPRKQKLTNAERIKSYSELQIGDYVVHINHGIGKYLGIETLEINGIHKDYLNIHYQGSDKLYVPVEQIDQVQKYVGSEGKEPKLYKLGGSEWKRVKKKVETSVQDIADDLIKLYAEREASKGYAFSPDHEMQREFESAFPYQETEDQLRSIHEIKKDMERERPMDRLLCGDVGYGKTEVAIRAAFKAIGDGKQVALLVPTTILAQQHYETIKERFQDYPINIGLLSRFRTRKEANETIKGLKNGTVDIVIGTHRLLSKDVVYKDLGLLIIDEEQRFGVTHKEKIKQIKANVDVLTLTATPIPRTLHMSMLGVRDLSVIETPPENRFPVQTYVVEYNGALVREAIERELARGGQVYFLYNRVEDIERKADEISMLVPDAKVAYAHGKMTENELETVMLSFLEGESDVLVSTTIIETGVDIPNVNTLIVFDADKMGLSQLYQLRGRVGRSNRVAYAYFTYRRDKVLTEVAEKRLQAIKEFTELGSGFKIAMRDLTIRGAGNLLGAQQHGFIDSVGFDLYSQMLKEAIEERKGDTAKTEQFETEIDVELDAYIPETYIQDGKQKIDMYKRFRSVATIEEKNELQDEMIDRFGNYPKEVEYLFTVAEMKVYARQERVELIKQDKDAVRLTISEEASAEIDGQKLFELGNQYGRQIGLGMEGKKLKISIQTKGRSADEWLDTVLGMLKGLKDVKKQTISST.

One can recognise a Helicase ATP-binding domain in the interval 638-799; that stretch reads DMERERPMDR…MLGVRDLSVI (162 aa). 651–658 is a binding site for ATP; sequence GDVGYGKT. Positions 752–755 match the DEEQ box motif; it reads DEEQ. The 155-residue stretch at 820–974 folds into the Helicase C-terminal domain; that stretch reads LVREAIEREL…GFKIAMRDLT (155 aa).

It in the N-terminal section; belongs to the UvrB family. This sequence in the C-terminal section; belongs to the helicase family. RecG subfamily.

It localises to the cytoplasm. In terms of biological role, couples transcription and DNA repair by recognizing RNA polymerase (RNAP) stalled at DNA lesions. Mediates ATP-dependent release of RNAP and its truncated transcript from the DNA, and recruitment of nucleotide excision repair machinery to the damaged site. Probably required to repair non-bulky DNA lesions. The protein is Transcription-repair-coupling factor of Bacillus subtilis (strain 168).